Consider the following 728-residue polypeptide: Protein Hook homolog 1 (728 aa).

Met-1 is modified (N-acetylmethionine). Residues 1–555 (MEDPQPLPQS…LKQKLEAHME (555 aa)) form a sufficient for interaction with microtubules region. In terms of domain architecture, Calponin-homology (CH) spans 12-128 (LPLCDSLIIW…RLLQLILGCA (117 aa)). Coiled coils occupy residues 168–443 (PASD…LNQA) and 477–658 (LRLQ…AKLR). Position 235 is a phosphoserine (Ser-235). The disordered stretch occupies residues 481–510 (QEGTENERIEQLQEQLEQKHRKMNELETEQ). The segment at 657-728 (LRDYEEKLIV…SVKVPAAASD (72 aa)) is sufficient for interaction with AKTIP and VPS18. Ser-719 and Ser-727 each carry phosphoserine.

This sequence belongs to the hook family. As to quaternary structure, self-associates. Component of the FTS/Hook/FHIP complex (FHF complex), composed of AKTIP/FTS, FHIP1B, and one or more members of the Hook family of proteins HOOK1, HOOK2, and HOOK3. Interacts directly with AKTIP/FTS, HOOK2 and HOOK3. Associates with several subunits of the homotypic vesicular sorting complex (the HOPS complex) including VPS16, VPS18, VPS39 and VPS41; these interactions may be indirect. Interacts with CCDC181. Interacts (via coiled-coil region) with RIMBP3 (via C-terminus). Interacts with LRGUK (via guanylate kinase-like domain). Interacts with microtubules. May interacts with CLN3. Interacts with AP4M1; the interaction is direct, mediates the interaction between FTS-Hook-FHIP (FHF) complex and AP-4 and the perinuclear distribution of AP-4. In terms of tissue distribution, mainly expressed in testis.

Its subcellular location is the cytoplasm. It is found in the cytoskeleton. In terms of biological role, component of the FTS/Hook/FHIP complex (FHF complex). The FHF complex may function to promote vesicle trafficking and/or fusion via the homotypic vesicular protein sorting complex (the HOPS complex). FHF complex promotes the distribution of AP-4 complex to the perinuclear area of the cell. Required for spermatid differentiation. Probably involved in the positioning of the microtubules of the manchette and the flagellum in relation to the membrane skeleton. The chain is Protein Hook homolog 1 (Hook1) from Mus musculus (Mouse).